Here is a 252-residue protein sequence, read N- to C-terminus: RNA-binding protein 7 (252 aa).

An RRM domain is found at 9–86 (RTLFVGNLDP…RQLNIKFKTG (78 aa)). 2 stretches are compositionally biased toward polar residues: residues 88 to 107 (SHINQEGKSPANSQNPSPAN) and 119 to 137 (QMGSPSYSPPQHMQRPFSS). Disordered stretches follow at residues 88–137 (SHIN…PFSS) and 171–252 (QLRG…WKHF). Basic and acidic residues-rich tracts occupy residues 211 to 230 (ERNRRDGQRGDFYHHDDRSG) and 237 to 252 (PPDRRRDSREGRWKHF).

Component of the nuclear exosome targeting (NEXT) complex composed of MTREX, ZCCHC8, and RBM7 that directs a subset of non-coding short-lived RNAs for exosomal degradation.

The protein localises to the nucleus. Its subcellular location is the nucleoplasm. RNA-binding subunit of the trimeric nuclear exosome targeting (NEXT) complex, a complex that functions as an RNA exosome cofactor that directs a subset of non-coding short-lived RNAs for exosomal degradation. NEXT is involved in surveillance and turnover of aberrant transcripts and non-coding RNAs. Binds preferentially polyuridine sequences and associates with newly synthesized RNAs, including pre-mRNAs and short-lived exosome substrates such as promoter upstream transcripts (PROMPTs), enhancer RNAs (eRNAs), and 3'-extended products from small nuclear RNAs (snRNAs). The polypeptide is RNA-binding protein 7 (Danio rerio (Zebrafish)).